The primary structure comprises 1008 residues: G protein-regulated inducer of neurite outgrowth 1 (1008 aa).

The interval 1-859 (MDTAEDPAWL…SPPSRRDAGL (859 aa)) is disordered. T60 carries the post-translational modification Phosphothreonine. 2 positions are modified to phosphoserine: S64 and S75. Positions 117-127 (ISGTPEATTSG) are enriched in polar residues. 4 stretches are compositionally biased toward basic and acidic residues: residues 137-159 (TEPKSSDDRNPMFLEKMDFKSSK), 167-178 (GKEDPGSSRKAD), 230-269 (PRKEDPGSLRKVDPVSSDKVDPVFPRKEEPRYSGKEHPVS), and 279-291 (EKVDLVLSGKRDP). S237 is modified (phosphoserine). Composition is skewed to polar residues over residues 326–336 (SGKNGPVSSGT) and 391–406 (HTDTTASAKTDLTSLK). Residues S436 and S452 each carry the phosphoserine modification. Residues 454–466 (GKEDPVSSRREDP) show a composition bias toward basic and acidic residues. The segment covering 481–491 (PESSGKTNPVS) has biased composition (polar residues). Residues 549 to 559 (GKEDPVSKGKA) are compositionally biased toward basic and acidic residues. S615 carries the post-translational modification Phosphoserine. Residues 643–656 (PGQEGAAAPGEAGA) show a composition bias toward low complexity. A compositionally biased stretch (basic and acidic residues) spans 659 to 679 (LKKETPQASEKVDPGSCRKAE). S737 carries the post-translational modification Phosphoserine. The span at 742-752 (RGSEGRVEPKA) shows a compositional bias: basic and acidic residues. Residues 755-764 (VSSTEASSLG) show a composition bias toward polar residues. At S799 the chain carries Phosphoserine. The segment covering 838-847 (SAFSFQAAPR) has biased composition (low complexity). T877 carries the phosphothreonine modification. S895 and S914 each carry phosphoserine. The segment at 899 to 1008 (AAVAPPEPAE…CCSRAGPTAE (110 aa)) is interaction with GNAO1. Residues 943–986 (ERQIEEHGRQGAPAPPPAARAGPGRSGSVRTAPPDGAAKRPPGL) form a disordered region. S993 is modified (phosphoserine). Residues C999 and C1000 are each lipidated (S-palmitoyl cysteine).

As to quaternary structure, interacts with activated forms of GNAI1, GNAO1 and GNAZ. In terms of processing, palmitoylation on Cys-999 and/or Cys-1000 is required for membrane targeting. In terms of tissue distribution, widely expressed in the central nervous system, with highest levels in spinal cord.

It is found in the cell membrane. The protein localises to the cell projection. Its subcellular location is the growth cone. May be involved in neurite outgrowth. This is G protein-regulated inducer of neurite outgrowth 1 (GPRIN1) from Homo sapiens (Human).